Here is a 397-residue protein sequence, read N- to C-terminus: Circumsporozoite protein (397 aa).

The N-terminal stretch at 1–18 is a signal peptide; it reads MMRKLAILSVSSFLFVEA. Residues 69 to 313 form a disordered region; the sequence is SRSLGENDDG…KNNNNEEPSD (245 aa). The tract at residues 85-92 is required for the binding to heparan sulfate proteoglycans (HSPGs) on the surface of host hepatocytes; sequence KLRKPKHK. Residues 93-97 form a region I; contains the proteolytic cleavage site region; that stretch reads KLKQP. Positions 101–273 are enriched in low complexity; it reads NPDPNANPNV…PNANPNANPN (173 aa). Repeat copies occupy residues 105 to 108, 109 to 112, 113 to 116, 117 to 120, 121 to 124, 125 to 128, 129 to 132, 133 to 136, 137 to 140, 141 to 144, 145 to 148, 149 to 152, 153 to 156, 157 to 160, 161 to 164, 165 to 168, 169 to 172, 173 to 176, 177 to 180, 181 to 184, 185 to 188, 189 to 192, 193 to 196, 197 to 200, 201 to 204, 205 to 208, 209 to 212, 213 to 216, 217 to 220, 221 to 224, 225 to 228, 229 to 232, 233 to 236, 237 to 240, 241 to 244, 245 to 248, 249 to 252, 253 to 256, 257 to 260, 261 to 264, 265 to 268, and 269 to 272. The 42 X 4 AA tandem repeats of N-[AV]-[ND]-P stretch occupies residues 105 to 272; it reads NANPNVDPNA…NPNANPNANP (168 aa). Over residues 274 to 290 the composition is skewed to polar residues; sequence KNNQGNGQGHNMPNDPN. Residues 295–309 are compositionally biased toward low complexity; it reads ENANANSAVKNNNNE. Residues 322–375 form the TSP type-1 domain; the sequence is KIQNSLSTEWSPCSVTCGNGIQVRIKPGSANKPKDELDYANDIEKKICKMEKCS. 2 disulfide bridges follow: Cys334-Cys369 and Cys338-Cys374. Residue Thr337 is glycosylated (O-linked (Fuc) threonine). A lipid anchor (GPI-anchor amidated cysteine) is attached at Cys374. A propeptide spans 375–397 (removed in mature form); the sequence is SSVFNVVNSSIGLIMVLSFLFLN.

The protein belongs to the plasmodium circumsporozoite protein family. In terms of processing, during host cell invasion, proteolytically cleaved at the cell membrane in the region I by a papain-like cysteine protease of parasite origin. Cleavage is triggered by the sporozoite contact with highly sulfated heparan sulfate proteoglycans (HSPGs) present on the host hepatocyte cell surface. Cleavage exposes the TSP type-1 (TSR) domain and is required for productive invasion of host hepatocytes but not for adhesion to the host cell membrane. Cleavage is dispensable for sporozoite development in the oocyst, motility and for traversal of host and vector cells. O-glycosylated; maybe by POFUT2.

It localises to the cell membrane. The protein resides in the cytoplasm. Its function is as follows. Essential sporozoite protein. In the mosquito vector, required for sporozoite development in the oocyst, migration through the vector hemolymph and entry into the vector salivary glands. In the vertebrate host, required for sporozoite migration through the host dermis and infection of host hepatocytes. Binds to highly sulfated heparan sulfate proteoglycans (HSPGs) on the surface of host hepatocytes. In terms of biological role, in the vertebrate host, binds to highly sulfated heparan sulfate proteoglycans (HSPGs) on the surface of host hepatocytes and is required for sporozoite invasion of the host hepatocytes. In Plasmodium falciparum (isolate NF54), this protein is Circumsporozoite protein.